Reading from the N-terminus, the 257-residue chain is MRILDYDKVIERILEFIREKGNNGVVIGISGGVDSATVAYLATKALGKEKVLGLIMPYFENKDVEDAKLVAEKLGIGYKVINIKPIVDSFVENLELNLDRKGLGNIMSRTRMIMLYAHANSLGRIVLGTSNRSEFLTGYFTKWGDGASDYAPIINLYKTEVWEIAKRIGVPERIVKKKPSAGLWEGQTDEDELGISYNLLDEILWRMIDLKIGKEEIAKDLGIPLSLVERVEELIKKSEHKRRLPIGPSFEDLIVGP.

28 to 35 (GISGGVDS) serves as a coordination point for ATP. Asp34 is a binding site for Mg(2+). Arg109 provides a ligand contact to deamido-NAD(+). Thr129 is a binding site for ATP. Glu134 serves as a coordination point for Mg(2+). The deamido-NAD(+) site is built by Lys142 and Asp149. The ATP site is built by Lys158 and Ser180. 240–241 (HK) provides a ligand contact to deamido-NAD(+).

Belongs to the NAD synthetase family. Homodimer.

The enzyme catalyses deamido-NAD(+) + NH4(+) + ATP = AMP + diphosphate + NAD(+) + H(+). The protein operates within cofactor biosynthesis; NAD(+) biosynthesis; NAD(+) from deamido-NAD(+) (ammonia route): step 1/1. In terms of biological role, catalyzes the ATP-dependent amidation of deamido-NAD to form NAD. Uses ammonia as a nitrogen source. This chain is NH(3)-dependent NAD(+) synthetase, found in Pyrococcus horikoshii (strain ATCC 700860 / DSM 12428 / JCM 9974 / NBRC 100139 / OT-3).